A 304-amino-acid polypeptide reads, in one-letter code: Tyrosine recombinase XerC (304 aa).

Residues 6–92 (NKLYLQAQAY…VLRQWFAYLV (87 aa)) enclose the Core-binding (CB) domain. A Tyr recombinase domain is found at 113 to 292 (HLPKNIDAER…DFQHLAKIYD (180 aa)). Active-site residues include arginine 152, lysine 176, histidine 244, arginine 247, and histidine 270. The active-site O-(3'-phospho-DNA)-tyrosine intermediate is the tyrosine 279.

It belongs to the 'phage' integrase family. XerC subfamily. In terms of assembly, forms a cyclic heterotetrameric complex composed of two molecules of XerC and two molecules of XerD.

It localises to the cytoplasm. Its function is as follows. Site-specific tyrosine recombinase, which acts by catalyzing the cutting and rejoining of the recombining DNA molecules. The XerC-XerD complex is essential to convert dimers of the bacterial chromosome into monomers to permit their segregation at cell division. It also contributes to the segregational stability of plasmids. The protein is Tyrosine recombinase XerC of Haemophilus ducreyi (strain 35000HP / ATCC 700724).